The primary structure comprises 458 residues: RuvB-like protein 1 (458 aa).

Residue 73–80 coordinates ATP; that stretch reads GPPGTGKT.

The protein belongs to the RuvB family. Interacts with FRI, and with FLX and FES1, two component of the transcription activator complex FRI-C. Interacts with the disease resistance genes RPM1 and RPP5.

It localises to the nucleus. It catalyses the reaction ATP + H2O = ADP + phosphate + H(+). Functionally, proposed core component of the chromatin remodeling INO80 complex which is involved in transcriptional regulation, DNA replication and probably DNA repair. Component of the NuA4 histone acetyltransferase complex which is involved in transcriptional activation of select genes principally by acetylation of nucleosomal histones H4 and H2A. Has single-stranded DNA-stimulated ATPase and ATP-dependent DNA helicase (3' to 5') activity suggesting a role in nuclear processes such as recombination and transcription. The chain is RuvB-like protein 1 (RIN1) from Arabidopsis thaliana (Mouse-ear cress).